Reading from the N-terminus, the 301-residue chain is uncharacterized protein (301 aa).

An FHA domain is found at 27 to 85 (YKIGRHTNKSTSPSPSNLFFNSKVLSRQHAELWLDKDTLSVYIRDVKSSNGTFVNETRL). A disordered region spans residues 187–236 (TGKTRDNRNNHHYSRKSSPHISSLAVPSTKHLDGERDRNLKRSTSPLSSS). The residue at position 204 (Ser-204) is a Phosphoserine. Residues 216-226 (KHLDGERDRNL) are compositionally biased toward basic and acidic residues. Residue Ser-231 is modified to Phosphoserine.

Interacts with sad1.

The protein localises to the nucleus. This is an uncharacterized protein from Schizosaccharomyces pombe (strain 972 / ATCC 24843) (Fission yeast).